The sequence spans 250 residues: Entry-fusion complex associated protein OPG095 (250 aa).

G2 carries N-myristoyl glycine; by host lipidation. Residues 2-12 are targeting to MV membrane; that stretch reads GAAASIQTTVN. Residues 2 to 183 are Virion surface-facing; it reads GAAASIQTTV…IAPKQVAGTG (182 aa). 3 disulfide bridges follow: C34-C57, C49-C136, and C116-C158. Residues 184–204 traverse the membrane as a helical segment; it reads VQFYMIVIGVIILAALFMYYA. Over 205 to 250 the chain is Intravirion; that stretch reads KRMLFTSTNDKIKLILANKENVHWTTYMDTFFRTSPMVIATTDMQN.

Belongs to the orthopoxvirus OPG095 family. As to quaternary structure, component of the entry fusion complex (EFC) composed of OPG053/F9, OPG076/O3, OPG086/G3, OPG094/G9, OPG095/L1, OPG099/L5, OPG107/H2, OPG143/A16, OPG104/J5, OPG147/A21 and OPG155/A28. Except for OPG095/L1 and OPG053/F9, each of the EFC proteins is required for assembly or stability of the complex. Myristoylated. In terms of processing, disulfid bonds are oxidized in the cytoplasm by OPG088 protein. Post-translationally, unglycosylated because produced in viral factories instead of the classic ER -Golgi route.

The protein resides in the virion membrane. In terms of biological role, component of the entry fusion complex (EFC), which consists of 11 proteins. During cell infection, this complex mediates entry of the virion core into the host cytoplasm by a two-step mechanism consisting of lipid mixing of the viral and cellular membranes and subsequent pore formation. In Bos taurus (Bovine), this protein is Entry-fusion complex associated protein OPG095 (OPG099).